Here is a 251-residue protein sequence, read N- to C-terminus: Imidazole glycerol phosphate synthase subunit HisF (251 aa).

Active-site residues include D12 and D131.

It belongs to the HisA/HisF family. In terms of assembly, heterodimer of HisH and HisF.

Its subcellular location is the cytoplasm. The catalysed reaction is 5-[(5-phospho-1-deoxy-D-ribulos-1-ylimino)methylamino]-1-(5-phospho-beta-D-ribosyl)imidazole-4-carboxamide + L-glutamine = D-erythro-1-(imidazol-4-yl)glycerol 3-phosphate + 5-amino-1-(5-phospho-beta-D-ribosyl)imidazole-4-carboxamide + L-glutamate + H(+). Its pathway is amino-acid biosynthesis; L-histidine biosynthesis; L-histidine from 5-phospho-alpha-D-ribose 1-diphosphate: step 5/9. Its function is as follows. IGPS catalyzes the conversion of PRFAR and glutamine to IGP, AICAR and glutamate. The HisF subunit catalyzes the cyclization activity that produces IGP and AICAR from PRFAR using the ammonia provided by the HisH subunit. The chain is Imidazole glycerol phosphate synthase subunit HisF from Streptomyces avermitilis (strain ATCC 31267 / DSM 46492 / JCM 5070 / NBRC 14893 / NCIMB 12804 / NRRL 8165 / MA-4680).